Consider the following 221-residue polypeptide: Eukaryotic translation initiation factor 3 subunit K (221 aa).

A PCI domain is found at 46 to 215; it reads YDLEANLACL…EKIEFDNLAP (170 aa).

The protein belongs to the eIF-3 subunit K family. Component of the eukaryotic translation initiation factor 3 (eIF-3) complex.

It localises to the cytoplasm. Functionally, component of the eukaryotic translation initiation factor 3 (eIF-3) complex, which is involved in protein synthesis of a specialized repertoire of mRNAs and, together with other initiation factors, stimulates binding of mRNA and methionyl-tRNAi to the 40S ribosome. The eIF-3 complex specifically targets and initiates translation of a subset of mRNAs involved in cell proliferation. The sequence is that of Eukaryotic translation initiation factor 3 subunit K from Anopheles gambiae (African malaria mosquito).